A 714-amino-acid chain; its full sequence is Calpain-1 catalytic subunit (714 aa).

In terms of domain architecture, Calpain catalytic spans 55-354 (LFRDEAFPPV…FTRLEICNLT (300 aa)). Residues glutamine 109 and aspartate 114 each coordinate Ca(2+). Active-site residues include cysteine 115, histidine 272, and asparagine 296. Aspartate 318 and aspartate 323 together coordinate Ca(2+). At threonine 354 the chain carries Phosphothreonine. The interval 355–526 (PDALKSQRVR…KKAGTQELDD (172 aa)) is domain III. Residues 527–542 (QVQAILPDEQVLSEEE) form a linker region. The interval 543–713 (IDENFKALFR…LFKWLQLTMF (171 aa)) is domain IV. EF-hand domains lie at 585-618 (FSLE…NRIR), 615-650 (NRIR…AGFK), and 680-714 (VRLE…TMFA). The Ca(2+) site is built by aspartate 598, aspartate 600, asparagine 602, lysine 604, glutamate 609, aspartate 628, aspartate 630, serine 632, serine 634, and glutamate 639.

This sequence belongs to the peptidase C2 family. In terms of assembly, forms a heterodimer with a small (regulatory) subunit CAPNS1. The cofactor is Ca(2+). Undergoes calcium-induced successive autoproteolytic cleavages that generate a membrane-bound 78 kDa active form and an intracellular 75 kDa active form. Calpastatin reduces with high efficiency the transition from 78 kDa to 75 kDa calpain forms.

It localises to the cytoplasm. It is found in the cell membrane. The catalysed reaction is Broad endopeptidase specificity.. With respect to regulation, activated by micromolar concentrations of calcium and inhibited by calpastatin. Functionally, calcium-regulated non-lysosomal thiol-protease which catalyzes limited proteolysis of substrates involved in cytoskeletal remodeling and signal transduction. Proteolytically cleaves CTBP1. Cleaves and activates caspase-7 (CASP7). This chain is Calpain-1 catalytic subunit, found in Sus scrofa (Pig).